The sequence spans 445 residues: METSKSSTMQVSFVCQRCSQPLKLDTSFKILDKVTMQELTAPLVTTAAVKPGDIQEVDSNIEETFAENRTDGVSRRLIPPARMMSTESATSFTLIGEASDGGTMENLSRRLKVTGDLFDIMSGQTDVDHPLCEECTDTLLDQLDTQLNITENECQNYKRCLEILERMNEDDKEKLEAKLKELAEDEERLIQELEEVERNRELVAKDIEKVREEAERLEQEEARYQKEYSEFKRQQLELDDDLKSVENQMRYAQIQLDKLKKTNVFNATFHIWHSGQFGTINNFRLGRLPSVPVEWNEINAAWGQTVLLLHALANKMGLQFQRYRLVPFGNHSYLESLTDKSKELPLYCSGGLRFFWDNKFDHAMVAFLDCVQQFKEEVEKGDTGFCLPYRMDVDKGKIEDTGGSGGSYSIKTQFNSEEQWTKALKFMLTNLKWGLAWVSSQFYNK.

Residues 103 to 122 carry the BH3 motif; the sequence is TMENLSRRLKVTGDLFDIMS. A coiled-coil region spans residues 137–264; the sequence is DTLLDQLDTQ…QLDKLKKTNV (128 aa). The interval 240–445 is evolutionary conserved domain (ECD); sequence DDLKSVENQM…AWVSSQFYNK (206 aa). The segment at 420–445 is required for membrane-association; the sequence is WTKALKFMLTNLKWGLAWVSSQFYNK.

This sequence belongs to the beclin family. Component of the PI3K (PI3KC3/PI3K-III/class III phosphatidylinositol 3-kinase) complex. May be proteolytically processed by caspases; the C-terminal fragment(s) may induce apoptosis.

The protein localises to the cytoplasm. It localises to the golgi apparatus. Its subcellular location is the trans-Golgi network membrane. The protein resides in the endosome membrane. It is found in the endoplasmic reticulum membrane. The protein localises to the mitochondrion membrane. It localises to the cytoplasmic vesicle. Its subcellular location is the autophagosome. Its function is as follows. Plays a central role in autophagy. Acts as core subunit of different PI3K complex forms that mediate formation of phosphatidylinositol 3-phosphate and are believed to play a role in multiple membrane trafficking pathways: PI3KC3-C1 is involved in initiation of autophagosomes and PI3KC3-C2 in maturation of autophagosomes and endocytosis. Involved in regulation of degradative endocytic trafficking and required for the abscission step in cytokinesis, probably in the context of PI3KC3-C2. Essential for the formation of PI3KC3-C2 but not PI3KC3-C1 PI3K complex forms. Involved in endocytosis including endosome formation in neuronal cells. The sequence is that of Beclin-1 (becn1) from Xenopus laevis (African clawed frog).